A 150-amino-acid polypeptide reads, in one-letter code: Small heat shock protein IbpB (150 aa).

Positions 26–137 (SQEPIDFPPY…QPQRIAIGGG (112 aa)) constitute a sHSP domain.

This sequence belongs to the small heat shock protein (HSP20) family. In terms of assembly, homodimer. Forms homomultimers of about 100-150 subunits at optimal growth temperatures. Conformation changes to oligomers at high temperatures or high ionic concentrations. The decrease in size of the multimers is accompanied by an increase in chaperone activity.

Its subcellular location is the cytoplasm. Functionally, associates with aggregated proteins, together with IbpA, to stabilize and protect them from irreversible denaturation and extensive proteolysis during heat shock and oxidative stress. Aggregated proteins bound to the IbpAB complex are more efficiently refolded and reactivated by the ATP-dependent chaperone systems ClpB and DnaK/DnaJ/GrpE. Its activity is ATP-independent. The chain is Small heat shock protein IbpB from Pectobacterium atrosepticum (strain SCRI 1043 / ATCC BAA-672) (Erwinia carotovora subsp. atroseptica).